The primary structure comprises 123 residues: SGSCEVKTCWVAQPDFRSIGDHLKDKYDSASEMVVEKHKEARGWVETLRPKYPLFKPPTDRDLIYYERSPNFCDPNSETGSFGTKDRVCNLTSHGIDGCDLLCCGRGHNTRTEKRKDKCHCVF.

A lipid anchor (O-palmitoleoyl serine; by PORCN) is attached at Ser-1. A disulfide bond links Cys-89 and Cys-104. Asn-90 carries an N-linked (GlcNAc...) asparagine glycan.

It belongs to the Wnt family. In terms of processing, palmitoleoylation is required for efficient binding to frizzled receptors. Depalmitoleoylation leads to Wnt signaling pathway inhibition.

The protein localises to the secreted. Its subcellular location is the extracellular space. The protein resides in the extracellular matrix. In terms of biological role, ligand for members of the frizzled family of seven transmembrane receptors. Functions in the canonical Wnt signaling pathway that results in activation of transcription factors of the TCF/LEF family. Required for normal embryonic development. This is Protein Wnt-3 (WNT-3) from Eptatretus stoutii (Pacific hagfish).